Consider the following 209-residue polypeptide: D-aminoacyl-tRNA deacylase 1 (209 aa).

Residues 139 to 140 (GP) carry the Gly-cisPro motif, important for rejection of L-amino acids motif. The segment at 142 to 209 (TIELESPAPG…EGDVSSEREP (68 aa)) is disordered. 2 stretches are compositionally biased toward basic and acidic residues: residues 159–170 (QLSKLEKQQQRK) and 181–194 (SSKE…EDRS). Serine 197, serine 204, and serine 205 each carry phosphoserine.

It belongs to the DTD family. In terms of assembly, homodimer. Interacts with CDC45 and TOPBP1. Preferentially phosphorylated in cells arrested early in S phase. Phosphorylation in the C-terminus weakens the interaction with CDC45.

The protein localises to the nucleus. It localises to the cytoplasm. The enzyme catalyses glycyl-tRNA(Ala) + H2O = tRNA(Ala) + glycine + H(+). It catalyses the reaction a D-aminoacyl-tRNA + H2O = a tRNA + a D-alpha-amino acid + H(+). An aminoacyl-tRNA editing enzyme that deacylates mischarged D-aminoacyl-tRNAs. Also deacylates mischarged glycyl-tRNA(Ala), protecting cells against glycine mischarging by AlaRS. Acts via tRNA-based rather than protein-based catalysis; rejects L-amino acids rather than detecting D-amino acids in the active site. By recycling D-aminoacyl-tRNA to D-amino acids and free tRNA molecules, this enzyme counteracts the toxicity associated with the formation of D-aminoacyl-tRNA entities in vivo and helps enforce protein L-homochirality. In terms of biological role, ATPase involved in DNA replication, may facilitate loading of CDC45 onto pre-replication complexes. This Mus musculus (Mouse) protein is D-aminoacyl-tRNA deacylase 1 (Dtd1).